The chain runs to 341 residues: NADH-quinone oxidoreductase subunit H (341 aa).

The next 8 helical transmembrane spans lie at 6–26 (LIVSYLVGFVLLNVLLGLMAY), 76–96 (LVFLVAPLLSFALAPLGAAVI), 118–138 (VAVLYVLALGSVGVYGIILGG), 157–177 (VISYELVLGLSLVGVFILSGS), 198–218 (LPNWYILSQPLAFALFLIAAV), 252–272 (FLAEYINMIVVSLLAATLFLG), 278–298 (FADGVWWLALKALFFLFFYVW), and 313–333 (GLAWKVLLPLALLNIGLTGLV).

The protein belongs to the complex I subunit 1 family. In terms of assembly, NDH-1 is composed of 14 different subunits. Subunits NuoA, H, J, K, L, M, N constitute the membrane sector of the complex.

It localises to the cell membrane. It catalyses the reaction a quinone + NADH + 5 H(+)(in) = a quinol + NAD(+) + 4 H(+)(out). In terms of biological role, NDH-1 shuttles electrons from NADH, via FMN and iron-sulfur (Fe-S) centers, to quinones in the respiratory chain. The immediate electron acceptor for the enzyme in this species is believed to be ubiquinone. Couples the redox reaction to proton translocation (for every two electrons transferred, four hydrogen ions are translocated across the cytoplasmic membrane), and thus conserves the redox energy in a proton gradient. This subunit may bind ubiquinone. The polypeptide is NADH-quinone oxidoreductase subunit H (Thermomicrobium roseum (strain ATCC 27502 / DSM 5159 / P-2)).